The chain runs to 155 residues: Small ribosomal subunit protein uS7 (155 aa).

It belongs to the universal ribosomal protein uS7 family. As to quaternary structure, part of the 30S ribosomal subunit. Contacts proteins S9 and S11.

In terms of biological role, one of the primary rRNA binding proteins, it binds directly to 16S rRNA where it nucleates assembly of the head domain of the 30S subunit. Is located at the subunit interface close to the decoding center, probably blocks exit of the E-site tRNA. The polypeptide is Small ribosomal subunit protein uS7 (Mycoplasma mycoides subsp. mycoides SC (strain CCUG 32753 / NCTC 10114 / PG1)).